The following is a 235-amino-acid chain: Small ribosomal subunit protein uS2c (235 aa).

The protein belongs to the universal ribosomal protein uS2 family.

It is found in the plastid. The protein localises to the chloroplast. The protein is Small ribosomal subunit protein uS2c (rps2) of Huperzia lucidula (Shining clubmoss).